The chain runs to 405 residues: Sesquiterpene synthase 16 (405 aa).

Mg(2+)-binding residues include Asp-155, Asp-159, and Glu-309. A DDXXD motif motif is present at residues 155–159 (DDTYD).

This sequence belongs to the terpene synthase family. Tpsa subfamily. Mg(2+) serves as cofactor. The cofactor is Mn(2+).

Its pathway is secondary metabolite biosynthesis; terpenoid biosynthesis. In terms of biological role, sesquiterpene synthase involved in the biosynthesis of volatile compounds. No activity detected with geranyl diphosphate (GPP) and farnesyl diphosphate (FPP) as substrates. The protein is Sesquiterpene synthase 16 of Solanum habrochaites (Wild tomato).